The sequence spans 256 residues: Ribonuclease 3 (256 aa).

Residues 3 to 125 enclose the RNase III domain; that stretch reads LDALQQRLGY…IVGAVFLDAG (123 aa). Residue Glu-38 participates in Mg(2+) binding. Asp-42 is an active-site residue. 2 residues coordinate Mg(2+): Asp-111 and Glu-114. Glu-114 is a catalytic residue. The DRBM domain maps to 152–222; sequence DAKTLLQEYL…AKLALDEVQK (71 aa). Residues 229–256 are disordered; it reads KRSRAERTGKTRKQPVPPDPQLSLRLKE.

It belongs to the ribonuclease III family. Homodimer. Requires Mg(2+) as cofactor.

It is found in the cytoplasm. It carries out the reaction Endonucleolytic cleavage to 5'-phosphomonoester.. Digests double-stranded RNA. Involved in the processing of primary rRNA transcript to yield the immediate precursors to the large and small rRNAs (23S and 16S). Processes some mRNAs, and tRNAs when they are encoded in the rRNA operon. Processes pre-crRNA and tracrRNA of type II CRISPR loci if present in the organism. This is Ribonuclease 3 from Cupriavidus pinatubonensis (strain JMP 134 / LMG 1197) (Cupriavidus necator (strain JMP 134)).